A 760-amino-acid polypeptide reads, in one-letter code: Semaphorin-4A (760 aa).

The signal sequence occupies residues M1–G32. Residues T33–H682 lie on the Extracellular side of the membrane. The region spanning Q36–R494 is the Sema domain. Residues C113 and C124 are joined by a disulfide bond. N-linked (GlcNAc...) asparagine glycans are attached at residues N120 and N135. Disulfide bonds link C142/C151, C269/C379, and C293/C339. N496 carries an N-linked (GlcNAc...) asparagine glycan. The 52-residue stretch at N496 to T547 folds into the PSI domain. 3 disulfides stabilise this stretch: C497/C514, C506/C523, and C579/C623. Positions N572 to Y630 constitute an Ig-like C2-type domain. N-linked (GlcNAc...) asparagine glycosylation occurs at N606. A helical transmembrane segment spans residues F683 to A703. Over S704–A760 the chain is Cytoplasmic. The interval M720–A760 is disordered. A compositionally biased stretch (basic and acidic residues) spans P723–S744.

This sequence belongs to the semaphorin family. Interacts with PLXNB1, PLXNB2 and PLXNB3. Interacts with PLXND1. Interacts with TIMD2. Expressed in neurons and glia in the developing hippocampus.

The protein localises to the cell membrane. Cell surface receptor for PLXNB1, PLXNB2, PLXNB3 and PLXND1 that plays an important role in cell-cell signaling. Regulates glutamatergic and GABAergic synapse development. Promotes the development of inhibitory synapses in a PLXNB1-dependent manner and promotes the development of excitatory synapses in a PLXNB2-dependent manner. Plays a role in priming antigen-specific T-cells, promotes differentiation of Th1 T-helper cells, and thereby contributes to adaptive immunity. Promotes phosphorylation of TIMD2. Inhibits angiogenesis. Promotes axon growth cone collapse. Inhibits axonal extension by providing local signals to specify territories inaccessible for growing axons. This is Semaphorin-4A (Sema4a) from Mus musculus (Mouse).